We begin with the raw amino-acid sequence, 114 residues long: Cytochrome b-c1 complex subunit 1, mitochondrial (114 aa).

Lys-31 bears the N6-acetyllysine mark.

The protein belongs to the peptidase M16 family. UQCRC1/QCR1 subfamily. Component of the ubiquinol-cytochrome c oxidoreductase (cytochrome b-c1 complex, complex III, CIII), a multisubunit enzyme composed of 11 subunits. The complex is composed of 3 respiratory subunits cytochrome b, cytochrome c1 and Rieske protein UQCRFS1, 2 core protein subunits UQCRC1/QCR1 and UQCRC2/QCR2, and 6 low-molecular weight protein subunits UQCRH/QCR6, UQCRB/QCR7, UQCRQ/QCR8, UQCR10/QCR9, UQCR11/QCR10 and subunit 9, the cleavage product of Rieske protein UQCRFS1. The complex exists as an obligatory dimer and forms supercomplexes (SCs) in the inner mitochondrial membrane with NADH-ubiquinone oxidoreductase (complex I, CI) and cytochrome c oxidase (complex IV, CIV), resulting in different assemblies (supercomplex SCI(1)III(2)IV(1) and megacomplex MCI(2)III(2)IV(2)). Interacts with UQCC6. Interacts with STMP1.

It is found in the mitochondrion inner membrane. Component of the ubiquinol-cytochrome c oxidoreductase, a multisubunit transmembrane complex that is part of the mitochondrial electron transport chain which drives oxidative phosphorylation. The respiratory chain contains 3 multisubunit complexes succinate dehydrogenase (complex II, CII), ubiquinol-cytochrome c oxidoreductase (cytochrome b-c1 complex, complex III, CIII) and cytochrome c oxidase (complex IV, CIV), that cooperate to transfer electrons derived from NADH and succinate to molecular oxygen, creating an electrochemical gradient over the inner membrane that drives transmembrane transport and the ATP synthase. The cytochrome b-c1 complex catalyzes electron transfer from ubiquinol to cytochrome c, linking this redox reaction to translocation of protons across the mitochondrial inner membrane, with protons being carried across the membrane as hydrogens on the quinol. In the process called Q cycle, 2 protons are consumed from the matrix, 4 protons are released into the intermembrane space and 2 electrons are passed to cytochrome c. The 2 core subunits UQCRC1/QCR1 and UQCRC2/QCR2 are homologous to the 2 mitochondrial-processing peptidase (MPP) subunits beta-MPP and alpha-MPP respectively, and they seem to have preserved their MPP processing properties. May be involved in the in situ processing of UQCRFS1 into the mature Rieske protein and its mitochondrial targeting sequence (MTS)/subunit 9 when incorporated into complex III. Seems to play an important role in the maintenance of proper mitochondrial function in nigral dopaminergic neurons. The polypeptide is Cytochrome b-c1 complex subunit 1, mitochondrial (Mesocricetus auratus (Golden hamster)).